The following is an 86-amino-acid chain: Anti-adapter protein IraP (86 aa).

Positions 1-38 (MKNLIAELLVKLAQKEEEAKELTVQVEALEIVVTALLR) form a coiled coil.

The protein belongs to the IraP family. Interacts with RssB.

It localises to the cytoplasm. Its function is as follows. Inhibits RpoS proteolysis by regulating RssB activity, thereby increasing the stability of the sigma stress factor RpoS especially during phosphate starvation, but also in stationary phase and during nitrogen starvation. Its effect on RpoS stability is due to its interaction with RssB, which probably blocks the interaction of RssB with RpoS, and the consequent delivery of the RssB-RpoS complex to the ClpXP protein degradation pathway. The protein is Anti-adapter protein IraP of Klebsiella pneumoniae subsp. pneumoniae (strain ATCC 700721 / MGH 78578).